A 301-amino-acid chain; its full sequence is D-alanine--D-alanine ligase (301 aa).

The region spanning 99-294 is the ATP-grasp domain; sequence KSVLEANGIR…FSELIDMIIQ (196 aa). An ATP-binding site is contributed by 126–181; it reads INELGYPVVVKPTHGGSSVATFIVKEEKEIENCVSEAFKWDSEVMIEKFIKGDEIT. Residues D248, E261, and N263 each coordinate Mg(2+).

The protein belongs to the D-alanine--D-alanine ligase family. It depends on Mg(2+) as a cofactor. The cofactor is Mn(2+).

It localises to the cytoplasm. The enzyme catalyses 2 D-alanine + ATP = D-alanyl-D-alanine + ADP + phosphate + H(+). Its pathway is cell wall biogenesis; peptidoglycan biosynthesis. Functionally, cell wall formation. The protein is D-alanine--D-alanine ligase of Clostridium beijerinckii (strain ATCC 51743 / NCIMB 8052) (Clostridium acetobutylicum).